The chain runs to 186 residues: Ribosomal RNA small subunit methyltransferase G (186 aa).

S-adenosyl-L-methionine contacts are provided by residues Gly59, Phe64, 110–111 (IE), and Arg124.

Belongs to the methyltransferase superfamily. RNA methyltransferase RsmG family.

It is found in the cytoplasm. The enzyme catalyses guanosine(527) in 16S rRNA + S-adenosyl-L-methionine = N(7)-methylguanosine(527) in 16S rRNA + S-adenosyl-L-homocysteine. Its function is as follows. Specifically methylates the N7 position of guanine in position 527 of 16S rRNA. The polypeptide is Ribosomal RNA small subunit methyltransferase G (Campylobacter curvus (strain 525.92)).